The primary structure comprises 184 residues: MMSQPPKVLLLYAHPESQDSVANRVLLQPVQQLEHVTVHDLYAHYPDFFIDIHYEQQLLREHQIIVFQHPLYTYSCPALLKEWLDRVLARGFANGVGGHALTGKYWRSVITTGEPEGAYRAGGYNRYPMEDILRPFELTAAMCHMHWMNPMIIYWARRQKPEVLASHAQAYAQWLQSPLATGGH.

This sequence belongs to the NAD(P)H dehydrogenase (quinone) family. KefG subfamily. In terms of assembly, interacts with KefB.

The protein resides in the cell inner membrane. It catalyses the reaction a quinone + NADH + H(+) = a quinol + NAD(+). It carries out the reaction a quinone + NADPH + H(+) = a quinol + NADP(+). Its function is as follows. Regulatory subunit of a potassium efflux system that confers protection against electrophiles. Required for full activity of KefB. The polypeptide is Glutathione-regulated potassium-efflux system ancillary protein KefG (Yersinia enterocolitica serotype O:8 / biotype 1B (strain NCTC 13174 / 8081)).